A 560-amino-acid chain; its full sequence is Putative transport protein ESA_02488 (560 aa).

Helical transmembrane passes span 8–28 (LLNGNYILLLFVVLALGLCLG), 32–52 (LGSVQLGNSIGVLVVSLLLGQ), 66–86 (FMLFIFCVGVEAGPNFFSIFF), 91–111 (NYLMLALVMVGSALLIALGLG), and 158–178 (HLSLGYALTYLIGLVSLIFGA). RCK C-terminal domains are found at residues 200 to 288 (RGLD…SFRN) and 292 to 373 (VFDR…RIGF). 5 helical membrane-spanning segments follow: residues 383–403 (LLAFCAFFIVGLMIGMITFQF), 406–426 (FSFGIGNAAGLLFAGIMLGFL), 447–467 (FGLMVFMAGVGLSAGSGIGHG), 475–495 (MLFAGLIVSLLPVVICFLFGA), and 539–559 (YAIANVLLTLAGTLIVIIWPG).

This sequence belongs to the AAE transporter (TC 2.A.81) family. YbjL subfamily.

Its subcellular location is the cell membrane. In Cronobacter sakazakii (strain ATCC BAA-894) (Enterobacter sakazakii), this protein is Putative transport protein ESA_02488.